The following is a 730-amino-acid chain: Cyclin-dependent kinase 12 (730 aa).

Disordered stretches follow at residues 1 to 230 (MEIS…APFS) and 246 to 283 (FSLSSIPPPPPQTDGGASSSKRQDPLPMPPDSKRIATR). A compositionally biased stretch (basic and acidic residues) spans 9-21 (THERDRKGSYGHR). Positions 57 to 67 (SISPQYKQRNW) are enriched in polar residues. Residues 75–94 (GRDRGRNDFSYRKKGKDYNK) show a composition bias toward basic and acidic residues. Composition is skewed to basic residues over residues 95-122 (RRDKRSRSRSRHRSPKRSGSSKKSKRRN) and 151-163 (KSKKKSRKRRKHS). Low complexity predominate over residues 194–203 (FNINPFQPMF). Residues 204–230 (SQPPPPPLPPNSQFMTPPPRPPPAPFS) show a composition bias toward pro residues. One can recognise a Protein kinase domain in the interval 313–605 (MLDQIGEGTY…AKEALNHPWI (293 aa)). Residues 317–325 (IGEGTYGQV), lysine 340, and 398–403 (EYVDHD) each bind ATP. Aspartate 444 (proton acceptor) is an active-site residue. The tract at residues 623 to 730 (DCHEMWSKKQ…QSQYQSVFFK (108 aa)) is disordered. Histidine 625 is an ATP binding site. Over residues 676-688 (NHHHHHHHSHHHA) the composition is skewed to basic residues. Over residues 714–730 (NNHQPVPQSQYQSVFFK) the composition is skewed to polar residues.

Belongs to the protein kinase superfamily. CMGC Ser/Thr protein kinase family. CDC2/CDKX subfamily.

The protein resides in the nucleus. It catalyses the reaction [DNA-directed RNA polymerase] + ATP = phospho-[DNA-directed RNA polymerase] + ADP + H(+). It carries out the reaction L-seryl-[protein] + ATP = O-phospho-L-seryl-[protein] + ADP + H(+). The enzyme catalyses L-threonyl-[protein] + ATP = O-phospho-L-threonyl-[protein] + ADP + H(+). Functionally, cyclin-dependent kinase which displays CTD kinase activity: hyperphosphorylates 'Ser-2' in the C-terminal heptapeptide repeat domain (CTD) of the largest RNA polymerase II subunit, thereby acting as a key regulator of transcription elongation. Required for normal reproduction. This Caenorhabditis elegans protein is Cyclin-dependent kinase 12.